The primary structure comprises 457 residues: Argininosuccinate lyase (457 aa).

The protein belongs to the lyase 1 family. Argininosuccinate lyase subfamily.

The protein resides in the cytoplasm. It catalyses the reaction 2-(N(omega)-L-arginino)succinate = fumarate + L-arginine. Its pathway is amino-acid biosynthesis; L-arginine biosynthesis; L-arginine from L-ornithine and carbamoyl phosphate: step 3/3. The chain is Argininosuccinate lyase from Shigella sonnei (strain Ss046).